Consider the following 873-residue polypeptide: Alanine--tRNA ligase (873 aa).

The Zn(2+) site is built by H562, H566, C663, and H667.

This sequence belongs to the class-II aminoacyl-tRNA synthetase family. The cofactor is Zn(2+).

The protein localises to the cytoplasm. The catalysed reaction is tRNA(Ala) + L-alanine + ATP = L-alanyl-tRNA(Ala) + AMP + diphosphate. In terms of biological role, catalyzes the attachment of alanine to tRNA(Ala) in a two-step reaction: alanine is first activated by ATP to form Ala-AMP and then transferred to the acceptor end of tRNA(Ala). Also edits incorrectly charged Ser-tRNA(Ala) and Gly-tRNA(Ala) via its editing domain. The polypeptide is Alanine--tRNA ligase (Bordetella avium (strain 197N)).